We begin with the raw amino-acid sequence, 192 residues long: MGSLGSKNPQTKQAQVLLLGLDSAGKSTLLYKLKLAKDITTIPTIGFNVEMIELERNLSLTVWDVGGQEKMRTVWGCYCENTDGLVYVVDSTDKQRLEESQRQFEHILKNEHIKNVPVVLLANKQDMPGALTAEDITRMFKVKKLCSDRNWYVQPCCALTGEGLAQGFRKLTGFVKSHMKSRGDTLAFFKQN.

The N-myristoyl glycine moiety is linked to residue glycine 2. GTP-binding positions include 20-27 (GLDSAGKS), 64-68 (DVGGQ), and 123-126 (NKQD).

The protein belongs to the small GTPase superfamily. Arf family. In terms of assembly, interacts with ARL14EP. In terms of tissue distribution, expressed in immature dendritic cells.

The protein localises to the cytoplasmic vesicle. Its function is as follows. GTPase that recruits MYO1E to MHC class II-containing vesicles via the effector protein ARL14EP and hence controls the movement of these vesicles along the actin cytoskeleton in dendritic cells. The sequence is that of ADP-ribosylation factor-like protein 14 (ARL14) from Homo sapiens (Human).